The sequence spans 337 residues: Major envelope glycoprotein (337 aa).

N-linked (GlcNAc...) asparagine; by host glycosylation is found at asparagine 76, asparagine 114, asparagine 271, and asparagine 301.

The protein belongs to the baculoviridae gp64 family. In terms of processing, palmitoylated.

The protein resides in the virion membrane. It localises to the host cell membrane. Functionally, envelope phosphoglycoprotein which mediates the fusion of viral and host endosomal membranes leading to virus entry into the host cell. The sequence is that of Major envelope glycoprotein (GP67) from Lepidoptera (butterflies and moths).